Consider the following 260-residue polypeptide: NH(3)-dependent NAD(+) synthetase (260 aa).

31–38 (GLSGGLDS) is an ATP binding site. Asp37 serves as a coordination point for Mg(2+). Position 112 (Arg112) interacts with deamido-NAD(+). An ATP-binding site is contributed by Thr132. Glu137 provides a ligand contact to Mg(2+). Positions 161 and 183 each coordinate ATP.

The protein belongs to the NAD synthetase family. Homodimer.

It carries out the reaction deamido-NAD(+) + NH4(+) + ATP = AMP + diphosphate + NAD(+) + H(+). The protein operates within cofactor biosynthesis; NAD(+) biosynthesis; NAD(+) from deamido-NAD(+) (ammonia route): step 1/1. In terms of biological role, catalyzes the ATP-dependent amidation of deamido-NAD to form NAD. Uses ammonia as a nitrogen source. The chain is NH(3)-dependent NAD(+) synthetase from Helicobacter pylori (strain P12).